We begin with the raw amino-acid sequence, 149 residues long: Large ribosomal subunit protein uL15 (149 aa).

Residues 1 to 54 (MSLKLHNLKPTPNSRPEKHRKGRGHAAGKGKQAGKGQSGQNKRKGHRLGFEGGQ) form a disordered region. Over residues 17 to 28 (EKHRKGRGHAAG) the composition is skewed to basic residues.

This sequence belongs to the universal ribosomal protein uL15 family. In terms of assembly, part of the 50S ribosomal subunit.

In terms of biological role, binds to the 23S rRNA. The chain is Large ribosomal subunit protein uL15 from Mycoplasmopsis synoviae (strain 53) (Mycoplasma synoviae).